The chain runs to 146 residues: D-aminoacyl-tRNA deacylase (146 aa).

Residues 137–138 (GP) carry the Gly-cisPro motif, important for rejection of L-amino acids motif.

The protein belongs to the DTD family. As to quaternary structure, homodimer.

The protein localises to the cytoplasm. The enzyme catalyses glycyl-tRNA(Ala) + H2O = tRNA(Ala) + glycine + H(+). It catalyses the reaction a D-aminoacyl-tRNA + H2O = a tRNA + a D-alpha-amino acid + H(+). In terms of biological role, an aminoacyl-tRNA editing enzyme that deacylates mischarged D-aminoacyl-tRNAs. Also deacylates mischarged glycyl-tRNA(Ala), protecting cells against glycine mischarging by AlaRS. Acts via tRNA-based rather than protein-based catalysis; rejects L-amino acids rather than detecting D-amino acids in the active site. By recycling D-aminoacyl-tRNA to D-amino acids and free tRNA molecules, this enzyme counteracts the toxicity associated with the formation of D-aminoacyl-tRNA entities in vivo and helps enforce protein L-homochirality. This chain is D-aminoacyl-tRNA deacylase, found in Anoxybacillus flavithermus (strain DSM 21510 / WK1).